We begin with the raw amino-acid sequence, 572 residues long: 2-succinyl-5-enolpyruvyl-6-hydroxy-3-cyclohexene-1-carboxylate synthase (572 aa).

The protein belongs to the TPP enzyme family. MenD subfamily. Homodimer. It depends on Mg(2+) as a cofactor. Mn(2+) is required as a cofactor. Thiamine diphosphate serves as cofactor.

The catalysed reaction is isochorismate + 2-oxoglutarate + H(+) = 5-enolpyruvoyl-6-hydroxy-2-succinyl-cyclohex-3-ene-1-carboxylate + CO2. It participates in quinol/quinone metabolism; 1,4-dihydroxy-2-naphthoate biosynthesis; 1,4-dihydroxy-2-naphthoate from chorismate: step 2/7. Its pathway is quinol/quinone metabolism; menaquinone biosynthesis. Its function is as follows. Catalyzes the thiamine diphosphate-dependent decarboxylation of 2-oxoglutarate and the subsequent addition of the resulting succinic semialdehyde-thiamine pyrophosphate anion to isochorismate to yield 2-succinyl-5-enolpyruvyl-6-hydroxy-3-cyclohexene-1-carboxylate (SEPHCHC). This Shewanella amazonensis (strain ATCC BAA-1098 / SB2B) protein is 2-succinyl-5-enolpyruvyl-6-hydroxy-3-cyclohexene-1-carboxylate synthase.